Reading from the N-terminus, the 234-residue chain is Purine nucleoside phosphorylase DeoD-type (234 aa).

A purine D-ribonucleoside is bound at residue His4. Phosphate is bound by residues Gly20, Arg24, Arg43, and 87-90 (RVGT). Residues Glu162, 178–180 (EME), and 202–203 (SD) contribute to the a purine D-ribonucleoside site. The active-site Proton donor is Asp203.

It belongs to the PNP/UDP phosphorylase family. In terms of assembly, homohexamer; trimer of homodimers.

It carries out the reaction a purine D-ribonucleoside + phosphate = a purine nucleobase + alpha-D-ribose 1-phosphate. The catalysed reaction is a purine 2'-deoxy-D-ribonucleoside + phosphate = a purine nucleobase + 2-deoxy-alpha-D-ribose 1-phosphate. In terms of biological role, catalyzes the reversible phosphorolytic breakdown of the N-glycosidic bond in the beta-(deoxy)ribonucleoside molecules, with the formation of the corresponding free purine bases and pentose-1-phosphate. This chain is Purine nucleoside phosphorylase DeoD-type, found in Anoxybacillus flavithermus (strain DSM 21510 / WK1).